We begin with the raw amino-acid sequence, 140 residues long: Small ribosomal subunit protein uS12 (140 aa).

At D102 the chain carries 3-methylthioaspartic acid.

It belongs to the universal ribosomal protein uS12 family. Part of the 30S ribosomal subunit. Contacts proteins S8 and S17. May interact with IF1 in the 30S initiation complex.

Its function is as follows. With S4 and S5 plays an important role in translational accuracy. In terms of biological role, interacts with and stabilizes bases of the 16S rRNA that are involved in tRNA selection in the A site and with the mRNA backbone. Located at the interface of the 30S and 50S subunits, it traverses the body of the 30S subunit contacting proteins on the other side and probably holding the rRNA structure together. The combined cluster of proteins S8, S12 and S17 appears to hold together the shoulder and platform of the 30S subunit. In Bacillus cytotoxicus (strain DSM 22905 / CIP 110041 / 391-98 / NVH 391-98), this protein is Small ribosomal subunit protein uS12.